Here is a 198-residue protein sequence, read N- to C-terminus: V-type ATP synthase subunit E (198 aa).

The protein belongs to the V-ATPase E subunit family.

Functionally, produces ATP from ADP in the presence of a proton gradient across the membrane. The protein is V-type ATP synthase subunit E of Acetivibrio thermocellus (strain ATCC 27405 / DSM 1237 / JCM 9322 / NBRC 103400 / NCIMB 10682 / NRRL B-4536 / VPI 7372) (Clostridium thermocellum).